The following is a 261-amino-acid chain: RNA-binding protein 1 (261 aa).

2 disordered regions span residues 1 to 38 (MADGYWNRQQSLLPHSGLHKRPRPDYEMPASGLPSGNE) and 232 to 261 (QFSRYPGPRSGGGPRSSGPPRGGHGSRGRR). An RRM domain is found at 151-236 (PTLYIEGLPS…SHLRLQFSRY (86 aa)). A compositionally biased stretch (gly residues) spans 240–254 (RSGGGPRSSGPPRGG).

As to expression, ubiquitous.

Its subcellular location is the nucleus speckle. The protein resides in the cytoplasmic granule. Functionally, RNA-binding protein interacting with the enod40 RNA. This chain is RNA-binding protein 1, found in Medicago truncatula (Barrel medic).